Here is a 209-residue protein sequence, read N- to C-terminus: Tektin bundle-interacting protein 1 (209 aa).

Microtubule inner protein component of sperm flagellar doublet microtubules.

Its subcellular location is the cytoplasm. The protein resides in the cytoskeleton. It localises to the cilium axoneme. It is found in the flagellum axoneme. In terms of biological role, microtubule inner protein (MIP) part of the dynein-decorated doublet microtubules (DMTs) in cilia axoneme, which is required for motile cilia beating. Located at the center of the tektin bundle where may function to recruit tektins or stabilize the bundle. This chain is Tektin bundle-interacting protein 1, found in Homo sapiens (Human).